The chain runs to 144 residues: Maximins 3/H5 (144 aa).

An N-terminal signal peptide occupies residues 1–18 (MNFKYIFAVSFLIASAYA). Propeptides lie at residues 19–43 (RSVQ…REIR) and 74–123 (TAEE…KEKR). At leucine 143 the chain carries Leucine amide.

This sequence belongs to the bombinin family. In terms of tissue distribution, expressed by the skin glands.

The protein localises to the secreted. Its function is as follows. Maximin-3 shows antibacterial activity against both Gram-positive and Gram-negative bacteria. It also shows antimicrobial activity against the fungus C.albicans, but not against A.flavus nor P.uticale. It has little hemolytic activity. It possess a significant cytotoxicity against tumor cell lines. It possess a significant anti-HIV activity. It shows high spermicidal activity. In terms of biological role, maximin-H5 shows antibacterial activity only against the Gram-positive bacteria S.aureus. The other bacterial and fungal strains tested were resistant to it. The presence of metal ions, like Zn(2+) and Mg(2+), did not increase its antimicrobial potency. Does not show hemolytic activity (in a concentration up to 80 uM). The polypeptide is Maximins 3/H5 (Bombina maxima (Giant fire-bellied toad)).